The sequence spans 385 residues: Polyketide synthase 4 (385 aa).

Cys-157 is an active-site residue.

This sequence belongs to the thiolase-like superfamily. Chalcone/stilbene synthases family. In terms of tissue distribution, expressed in glandular trichomes.

It is found in the cytoplasm. Its function is as follows. Polyketide synthase responsible for the biosynthesis of secondary metabolites. This is Polyketide synthase 4 (PKSG4) from Cannabis sativa (Hemp).